Here is a 393-residue protein sequence, read N- to C-terminus: Cyclin CCL1 (393 aa).

Residues 1-19 (MTDIQLNGKSTLDTPSATM) show a composition bias toward polar residues. 2 disordered regions span residues 1 to 45 (MTDI…RISD) and 289 to 325 (SREG…SEEY). Composition is skewed to basic and acidic residues over residues 21-35 (AKEK…DENN) and 300-321 (NEKE…KSTE).

This sequence belongs to the cyclin family. Cyclin C subfamily. In terms of assembly, CCL1 and KIN28 form the TFIIK complex, a component of TFIIH holo complex. Component of a complex consisting of KIN28, CCL1 and TFB3.

Its function is as follows. Regulatory component of the TFIIK complex (KIN28-CCL1 dimer) which is the protein kinase component of transcription factor IIH (TFIIH) and phosphorylates the C-terminal domain of RNA polymerase II during transition from transcription to elongation after preinitiation complex (PIC) formation, thereby positively regulating transcription. TFIIH (or factor B) is essential for both basal and activated transcription, and is involved in nucleotide excision repair (NER) of damaged DNA. TFIIH has DNA-dependent ATPase activity and is essential for polymerase II transcription in vitro. This Saccharomyces cerevisiae (strain ATCC 204508 / S288c) (Baker's yeast) protein is Cyclin CCL1 (CCL1).